Here is a 960-residue protein sequence, read N- to C-terminus: Importin alpha re-exporter (960 aa).

HEAT repeat units lie at residues 1–33, 34–73, 74–120, 121–157, 158–220, 221–278, 279–323, 324–392, 393–445, 446–489, 490–528, 529–586, 587–630, 631–674, 675–716, 717–751, 752–794, and 795–826; these read MSDLETVAKFLAESVIASTAKTSERNLRQLETQ, DGFGLTLLHVIASTNLPLSTRLAGALFFKNFIKRKWVDEN, GNHL…FPDR, WPTLLSDLASRLSNDDMVTNKGVLTVAHSIFKRWRPL, FRSD…NCQD, IPEF…TRYE, DVFG…TRIP, KYFE…KEKN, EVLV…GVSS, TNNL…RNQL, TKAQLIELMPILATFLQTDEYVVYTYAAITIEKILTIRE, SNTS…TSED, SIQP…LNYT, QRQN…QSAT, IPES…SSIF, PDLVPVLGIFQRLIASKAYEVHGFDLLEHIMLLID, MNRL…NKLG, and SDFLIHFIDEVQDGLFQQIWGNFIITTLPTIG. The Importin N-terminal domain maps to 23–96; sequence SERNLRQLET…KKEIVPLMIS (74 aa). A Nuclear localization signal motif is present at residues 366-381; that stretch reads RRDLEGSDTDTRRRAC. An HEAT 19; with insert repeat occupies 827-928; that stretch reads NLLDRKIALI…RLYVAEALNK (102 aa). One copy of the HEAT 20 repeat lies at 929–960; it reads YNAISGNTFLNTILPQLTQENQVKLNQLLVGN.

The protein belongs to the XPO2/CSE1 family. In terms of assembly, binds with high affinity to SRP1 only in the presence of RanGTP. The complex is dissociated by the RanGTP-binding protein YRB1.

It localises to the cytoplasm. It is found in the nucleus. Its function is as follows. Export receptor for importin alpha (SRP1). Mediates importin-alpha re-export from the nucleus to the cytoplasm after import substrates have been released into the nucleoplasm. In Saccharomyces cerevisiae (strain ATCC 204508 / S288c) (Baker's yeast), this protein is Importin alpha re-exporter (CSE1).